A 458-amino-acid polypeptide reads, in one-letter code: Argininosuccinate lyase (458 aa).

The protein belongs to the lyase 1 family. Argininosuccinate lyase subfamily.

Its subcellular location is the cytoplasm. The catalysed reaction is 2-(N(omega)-L-arginino)succinate = fumarate + L-arginine. It participates in amino-acid biosynthesis; L-arginine biosynthesis; L-arginine from L-ornithine and carbamoyl phosphate: step 3/3. The polypeptide is Argininosuccinate lyase (Bacillus velezensis (strain DSM 23117 / BGSC 10A6 / LMG 26770 / FZB42) (Bacillus amyloliquefaciens subsp. plantarum)).